Consider the following 189-residue polypeptide: Threonylcarbamoyl-AMP synthase (189 aa).

Positions 7 to 189 (NPRVNYAANM…LLTGQVVRPS (183 aa)) constitute a YrdC-like domain.

The protein belongs to the SUA5 family. TsaC subfamily.

The protein resides in the cytoplasm. The catalysed reaction is L-threonine + hydrogencarbonate + ATP = L-threonylcarbamoyladenylate + diphosphate + H2O. Functionally, required for the formation of a threonylcarbamoyl group on adenosine at position 37 (t(6)A37) in tRNAs that read codons beginning with adenine. Catalyzes the conversion of L-threonine, HCO(3)(-)/CO(2) and ATP to give threonylcarbamoyl-AMP (TC-AMP) as the acyladenylate intermediate, with the release of diphosphate. This chain is Threonylcarbamoyl-AMP synthase, found in Cellvibrio japonicus (strain Ueda107) (Pseudomonas fluorescens subsp. cellulosa).